We begin with the raw amino-acid sequence, 134 residues long: Cytochrome b (134 aa).

The next 3 membrane-spanning stretches (helical) occupy residues 33-53 (FGSL…FLAM), 77-98 (WVLR…YVHV), and 113-133 (WNVG…GYVL). 2 residues coordinate heme b: His83 and His97.

Belongs to the cytochrome b family. In terms of assembly, the cytochrome bc1 complex contains 11 subunits: 3 respiratory subunits (MT-CYB, CYC1 and UQCRFS1), 2 core proteins (UQCRC1 and UQCRC2) and 6 low-molecular weight proteins (UQCRH/QCR6, UQCRB/QCR7, UQCRQ/QCR8, UQCR10/QCR9, UQCR11/QCR10 and a cleavage product of UQCRFS1). This cytochrome bc1 complex then forms a dimer. Heme b is required as a cofactor.

Its subcellular location is the mitochondrion inner membrane. Its function is as follows. Component of the ubiquinol-cytochrome c reductase complex (complex III or cytochrome b-c1 complex) that is part of the mitochondrial respiratory chain. The b-c1 complex mediates electron transfer from ubiquinol to cytochrome c. Contributes to the generation of a proton gradient across the mitochondrial membrane that is then used for ATP synthesis. This Anoura caudifer (Hairy-legged long-tongued bat) protein is Cytochrome b (MT-CYB).